The chain runs to 508 residues: DNA polymerase II small subunit (508 aa).

A compositionally biased stretch (low complexity) spans 66–80 (ASSAAQTSAPASTPP). Residues 66–122 (ASSAAQTSAPASTPPDEATTHTDPSATDTPPNHDGGRAATADARSVEIDGDMTGAST) are disordered. Residues 86 to 95 (HTDPSATDTP) are compositionally biased toward polar residues.

Belongs to the DNA polymerase delta/II small subunit family. Heterodimer of a large subunit and a small subunit.

The catalysed reaction is DNA(n) + a 2'-deoxyribonucleoside 5'-triphosphate = DNA(n+1) + diphosphate. It catalyses the reaction Exonucleolytic cleavage in the 3'- to 5'-direction to yield nucleoside 5'-phosphates.. Its function is as follows. Possesses two activities: a DNA synthesis (polymerase) and an exonucleolytic activity that degrades single-stranded DNA in the 3' to 5' direction. Has a template-primer preference which is characteristic of a replicative DNA polymerase. The chain is DNA polymerase II small subunit from Halobacterium salinarum (strain ATCC 29341 / DSM 671 / R1).